A 989-amino-acid chain; its full sequence is Atos homolog protein A (989 aa).

The tract at residues 24 to 32 (TLLITEGRT) is transactivation domain 1 (TAD1). Disordered stretches follow at residues 244 to 295 (GEGG…LPPG), 393 to 477 (PDAL…KPAT), 525 to 639 (QNEQ…GLTQ), and 656 to 686 (EAEKHVRDGSTCLEKDENQEPHSSLSSTPAN). The span at 254-270 (RSSLRLPRSPLFSRSLH) shows a compositional bias: low complexity. Residues 397–412 (FTSQEPPGHKTTWNST) show a composition bias toward polar residues. Composition is skewed to basic and acidic residues over residues 413–423 (QDKECLKKSKD) and 460–471 (TRLDRVDRESKT). 2 stretches are compositionally biased toward polar residues: residues 525–544 (QNEQVGSNHGAQTNGFVSLS) and 600–638 (TKSQPLTASNHQHYVSRESWTSLKNNSSHASSPQENGLT). Residues 656-675 (EAEKHVRDGSTCLEKDENQE) show a composition bias toward basic and acidic residues. The segment covering 676-686 (PHSSLSSTPAN) has biased composition (polar residues). Residues 792 to 849 (LLGNFEECVLNYRLEPLGTVEGFTAEVGASGTFCPSHMTLPVDVSFYSVSDDNAPSPY) are required for macropage invasion. Residues 876–884 (FNPNKTVVK) are transactivation domain 2 (TAD2).

It belongs to the ATOS family.

The protein resides in the nucleus. In terms of biological role, transcription regulator that syncronizes transcriptional and translational programs to promote macrophage invasion of tissues. The protein is Atos homolog protein A (atosa) of Danio rerio (Zebrafish).